The primary structure comprises 563 residues: Dihydroxy-acid dehydratase (563 aa).

Mg(2+) is bound at residue aspartate 79. Residue cysteine 120 coordinates [2Fe-2S] cluster. Residues aspartate 121 and lysine 122 each coordinate Mg(2+). An N6-carboxylysine modification is found at lysine 122. Position 193 (cysteine 193) interacts with [2Fe-2S] cluster. Residue glutamate 451 coordinates Mg(2+). Serine 477 (proton acceptor) is an active-site residue.

This sequence belongs to the IlvD/Edd family. As to quaternary structure, homodimer. Requires [2Fe-2S] cluster as cofactor. Mg(2+) is required as a cofactor.

It carries out the reaction (2R)-2,3-dihydroxy-3-methylbutanoate = 3-methyl-2-oxobutanoate + H2O. The enzyme catalyses (2R,3R)-2,3-dihydroxy-3-methylpentanoate = (S)-3-methyl-2-oxopentanoate + H2O. It functions in the pathway amino-acid biosynthesis; L-isoleucine biosynthesis; L-isoleucine from 2-oxobutanoate: step 3/4. Its pathway is amino-acid biosynthesis; L-valine biosynthesis; L-valine from pyruvate: step 3/4. In terms of biological role, functions in the biosynthesis of branched-chain amino acids. Catalyzes the dehydration of (2R,3R)-2,3-dihydroxy-3-methylpentanoate (2,3-dihydroxy-3-methylvalerate) into 2-oxo-3-methylpentanoate (2-oxo-3-methylvalerate) and of (2R)-2,3-dihydroxy-3-methylbutanoate (2,3-dihydroxyisovalerate) into 2-oxo-3-methylbutanoate (2-oxoisovalerate), the penultimate precursor to L-isoleucine and L-valine, respectively. The sequence is that of Dihydroxy-acid dehydratase from Sulfurovum sp. (strain NBC37-1).